A 154-amino-acid chain; its full sequence is SsrA-binding protein (154 aa).

It belongs to the SmpB family.

It is found in the cytoplasm. Functionally, required for rescue of stalled ribosomes mediated by trans-translation. Binds to transfer-messenger RNA (tmRNA), required for stable association of tmRNA with ribosomes. tmRNA and SmpB together mimic tRNA shape, replacing the anticodon stem-loop with SmpB. tmRNA is encoded by the ssrA gene; the 2 termini fold to resemble tRNA(Ala) and it encodes a 'tag peptide', a short internal open reading frame. During trans-translation Ala-aminoacylated tmRNA acts like a tRNA, entering the A-site of stalled ribosomes, displacing the stalled mRNA. The ribosome then switches to translate the ORF on the tmRNA; the nascent peptide is terminated with the 'tag peptide' encoded by the tmRNA and targeted for degradation. The ribosome is freed to recommence translation, which seems to be the essential function of trans-translation. The protein is SsrA-binding protein of Synechococcus sp. (strain JA-3-3Ab) (Cyanobacteria bacterium Yellowstone A-Prime).